A 205-amino-acid polypeptide reads, in one-letter code: Auxin-responsive protein IAA8 (205 aa).

Residues 1 to 48 (MECMASTEESLPASSSMDSCSGELPTTTTTAPAQSTASSGCRPPATAA) are disordered. A compositionally biased stretch (polar residues) spans 7-19 (TEESLPASSSMDS). Positions 25 to 39 (PTTTTTAPAQSTASS) are enriched in low complexity. An EAR-like (transcriptional repression) motif is present at residues 58 to 62 (LRLGL). The interval 71–98 (DGNNPSTPRSSLTTATVTADRGGGGGGH) is disordered. Over residues 73–87 (NNPSTPRSSLTTATV) the composition is skewed to polar residues. In terms of domain architecture, PB1 spans 103-199 (SLFVKVYMEG…KRLRIARADD (97 aa)).

It belongs to the Aux/IAA family. Homodimers and heterodimers. In terms of tissue distribution, highly expressed in green shoots. Expressed in flowers.

It is found in the nucleus. Functionally, aux/IAA proteins are short-lived transcriptional factors that function as repressors of early auxin response genes at low auxin concentrations. In Oryza sativa subsp. japonica (Rice), this protein is Auxin-responsive protein IAA8 (IAA8).